The chain runs to 776 residues: Lysyl oxidase homolog 2 (776 aa).

The first 25 residues, 1 to 25 (MEIPFGSCLYSCLALLVLLPSLSLA), serve as a signal peptide directing secretion. SRCR domains lie at 61 to 162 (VRLA…VVCS), 191 to 305 (IRPI…VSCV), 329 to 428 (VRLR…VRCN), and 438 to 546 (VRLN…VACS). 9 cysteine pairs are disulfide-bonded: Cys-87-Cys-151, Cys-100-Cys-161, Cys-131-Cys-141, Cys-221-Cys-294, Cys-234-Cys-304, Cys-268-Cys-278, Cys-354-Cys-417, Cys-367-Cys-427, and Cys-398-Cys-408. N-linked (GlcNAc...) asparagine glycosylation occurs at Asn-267. Residue Asn-291 is glycosylated (N-linked (GlcNAc...) asparagine). A glycan (N-linked (GlcNAc...) asparagine) is linked at Asn-458. Intrachain disulfides connect Cys-467–Cys-532, Cys-480–Cys-545, and Cys-514–Cys-524. Residues 550-753 (PDLVLNAEIV…WMYNCHVGGA (204 aa)) are lysyl-oxidase like. Ca(2+) contacts are provided by Asp-551 and Leu-552. 4 disulfides stabilise this stretch: Cys-575–Cys-627, Cys-581–Cys-697, Cys-659–Cys-675, and Cys-665–Cys-687. Residues His-628, His-630, and His-632 each contribute to the Cu cation site. Residue Asn-646 is glycosylated (N-linked (GlcNAc...) asparagine). Positions 655 to 691 (KASFCLEDTECEGDIQKSYECANFGEQGITMGCWDMY) form a cross-link, lysine tyrosylquinone (Lys-Tyr). Tyr-691 is subject to 2',4',5'-topaquinone. Residues Glu-724, Asp-726, Asn-729, and Asn-730 each contribute to the Ca(2+) site. Cys-734 and Cys-748 are oxidised to a cystine.

The protein belongs to the lysyl oxidase family. In terms of assembly, component of some chromatin repressor complex. Interacts with SNAI1. Interacts with TAF10. Interacts with HSPA5. Interacts with EFEMP2. Cu cation serves as cofactor. The cofactor is lysine tyrosylquinone residue. In terms of processing, the lysine tyrosylquinone cross-link (LTQ) is generated by condensation of the epsilon-amino group of a lysine with a topaquinone produced by oxidation of tyrosine. N-glycosylated. N-glycosylation on Asn-458 and Asn-646 may be essential for proper folding and secretion; may be composed of a fucosylated carbohydrates attached to a trimannose N-linked glycan core.

It is found in the secreted. It localises to the extracellular space. The protein localises to the extracellular matrix. The protein resides in the basement membrane. Its subcellular location is the nucleus. It is found in the chromosome. It localises to the endoplasmic reticulum. It catalyses the reaction L-lysyl-[protein] + O2 + H2O = (S)-2-amino-6-oxohexanoyl-[protein] + H2O2 + NH4(+). Its activity is regulated as follows. Specifically inhibited by a mouse monoclonal antibody AB0023, inhibition occurs in a non-competitive manner. In terms of biological role, mediates the post-translational oxidative deamination of lysine residues on target proteins leading to the formation of deaminated lysine (allysine). Acts as a transcription corepressor and specifically mediates deamination of trimethylated 'Lys-4' of histone H3 (H3K4me3), a specific tag for epigenetic transcriptional activation. Shows no activity against histone H3 when it is trimethylated on 'Lys-9' (H3K9me3) or 'Lys-27' (H3K27me3) or when 'Lys-4' is monomethylated (H3K4me1) or dimethylated (H3K4me2). Also mediates deamination of methylated TAF10, a member of the transcription factor IID (TFIID) complex, which induces release of TAF10 from promoters, leading to inhibition of TFIID-dependent transcription. LOXL2-mediated deamination of TAF10 results in transcriptional repression of genes required for embryonic stem cell pluripotency including POU5F1/OCT4, NANOG, KLF4 and SOX2. Involved in epithelial to mesenchymal transition (EMT) via interaction with SNAI1 and participates in repression of E-cadherin CDH1, probably by mediating deamination of histone H3. During EMT, involved with SNAI1 in negatively regulating pericentromeric heterochromatin transcription. SNAI1 recruits LOXL2 to pericentromeric regions to oxidize histone H3 and repress transcription which leads to release of heterochromatin component CBX5/HP1A, enabling chromatin reorganization and acquisition of mesenchymal traits. Interacts with the endoplasmic reticulum protein HSPA5 which activates the IRE1-XBP1 pathway of the unfolded protein response, leading to expression of several transcription factors involved in EMT and subsequent EMT induction. When secreted into the extracellular matrix, promotes cross-linking of extracellular matrix proteins by mediating oxidative deamination of peptidyl lysine residues in precursors to fibrous collagen and elastin. Acts as a regulator of sprouting angiogenesis, probably via collagen IV scaffolding. Acts as a regulator of chondrocyte differentiation, probably by regulating expression of factors that control chondrocyte differentiation. This chain is Lysyl oxidase homolog 2 (Loxl2), found in Rattus norvegicus (Rat).